A 183-amino-acid chain; its full sequence is Der GTPase-activating protein YihI (183 aa).

Low complexity predominate over residues 1–18; that stretch reads MNQPSKAPRAPRSSAATP. A disordered region spans residues 1-114; that stretch reads MNQPSKAPRA…EEELAKLEND (114 aa). A compositionally biased stretch (basic and acidic residues) spans 25-34; sequence RAELDQEARE. Residues 56-65 are compositionally biased toward low complexity; it reads NQKNKAAAQA. The span at 92–114 shows a compositional bias: basic and acidic residues; that stretch reads PKAEAKPKPRLTPEEELAKLEND.

It belongs to the YihI family. As to quaternary structure, interacts with Der.

Functionally, a GTPase-activating protein (GAP) that modifies Der/EngA GTPase function. May play a role in ribosome biogenesis. The protein is Der GTPase-activating protein YihI of Serratia proteamaculans (strain 568).